The primary structure comprises 396 residues: Purine ribonucleoside efflux pump NepI (396 aa).

The Cytoplasmic segment spans residues 1–21 (MSEFIAENRGADAITRPNWSA). A helical transmembrane segment spans residues 22 to 42 (VFSVAFCVACLIIVEFLPVSL). The Periplasmic portion of the chain corresponds to 43–54 (LTPMAQDLGISE). A helical membrane pass occupies residues 55 to 75 (GVAGQSVTVTAFVAMFASLFI). Topologically, residues 76-85 (TQTIQATDRR) are cytoplasmic. A helical transmembrane segment spans residues 86 to 106 (YVVILFAVLLTLSCLLVSFAN). Residue serine 107 is a topological domain, periplasmic. A helical transmembrane segment spans residues 108–128 (FSLLLIGRACLGLALGGFWAM). Residues 129–147 (SASLTMRLVPPRTVPKALS) are Cytoplasmic-facing. Residues 148–168 (VIFGAVSIALVIAAPLGSFLG) traverse the membrane as a helical segment. Residues 169 to 175 (ELIGWRN) are Periplasmic-facing. The chain crosses the membrane as a helical span at residues 176 to 196 (VFNAAAVMGVLCIFWIIKSLP). Over 197–215 (SLPGEPSHQKQNTFRLLQR) the chain is Cytoplasmic. The chain crosses the membrane as a helical span at residues 216–236 (PGVMAGMIAIFMSFAGQFAFF). Residues 237–255 (TYIRPVYMNLAGFGVDGLT) lie on the Periplasmic side of the membrane. Residues 256–276 (LVLLSFGIASFIGTSLSSFIL) traverse the membrane as a helical segment. Over 277-281 (KRSVK) the chain is Cytoplasmic. The chain crosses the membrane as a helical span at residues 282 to 302 (LALAGAPLILAVSALVLTLWG). At 303-305 (SDK) the chain is on the periplasmic side. A helical transmembrane segment spans residues 306 to 326 (IVATGVAIIWGLTFALVPVGW). The Cytoplasmic segment spans residues 327-343 (STWITRSLADQAEKAGS). The helical transmembrane segment at 344 to 364 (IQVAVIQLANTCGAAIGGYAL) threads the bilayer. The Periplasmic segment spans residues 365–366 (DN). The helical transmembrane segment at 367 to 387 (IGLTSPLMLSGTLMLLTALLV) threads the bilayer. Residues 388 to 396 (TAKVKMKKS) lie on the Cytoplasmic side of the membrane.

The protein belongs to the major facilitator superfamily. DHA1 family. NepI (TC 2.A.1.2.26) subfamily.

The protein localises to the cell inner membrane. The catalysed reaction is inosine(in) + H(+)(out) = inosine(out) + H(+)(in). The enzyme catalyses guanosine(in) + H(+)(out) = guanosine(out) + H(+)(in). Involved in the efflux of purine ribonucleosides, such as inosine and guanosine. The chain is Purine ribonucleoside efflux pump NepI from Shigella flexneri.